A 648-amino-acid polypeptide reads, in one-letter code: MTNPTPRPETPLLDRVCCPADMKALSDAELERLADEVRSEVISVVAETGGHLGSSLGVVELTVALHAVFNTPTDKLVWDVGHQCYPHKILTGRREQMRTLRQKGGLSGFTKRSESAYDPFGAAHSSTSISAALGFAMGRELGQPVGDTIAVIGDGSITAGMAYEALNHAGHLNKRLFVILNDNDMSIAPPVGALARYLVNLSSKAPFATLRAAADGLEASLPGPLRDGARRARQLVTGMPGGGTLFEELGFTYVGPIDGHDMEALLQTLRAARARTTGPVLIHVVTKKGKGYAPAENAPDKYHGVNKFDPVTGEQKKSVANAPNYTKVFGSTLTEEAARDPRIVAITAAMPSGTGVDIMQKRFPNRVFDVGIAEQHAVTFAAGLAGAGMKPFCAIYSSFLQRGYDQIAHDVALQNLPVRFVIDRAGLVGADGATHAGAFDVGFITSLPNMTVMAAADEAELIHMIATAVAFDEGPIAFRFPRGEGVGVEMPERGTVLEPGRGRVVREGTDVAILSFGAHLHEALQAAKLLEAEGVSVTVADARFSRPLDTGLIDQLVRHHAALVTVEQGAMGGFGAHVMHYLANSGGFDGGLALRVMTLPDRFIEQASPEDMYADAGLRAEDIAATARGALARGRVMPLRQTAKPRAV.

Residues histidine 82 and 123–125 (AHS) each bind thiamine diphosphate. Aspartate 154 serves as a coordination point for Mg(2+). Residues 155 to 156 (GS), asparagine 183, tyrosine 292, and glutamate 374 each bind thiamine diphosphate. Mg(2+) is bound at residue asparagine 183.

It belongs to the transketolase family. DXPS subfamily. In terms of assembly, homodimer. It depends on Mg(2+) as a cofactor. Thiamine diphosphate is required as a cofactor.

The catalysed reaction is D-glyceraldehyde 3-phosphate + pyruvate + H(+) = 1-deoxy-D-xylulose 5-phosphate + CO2. It functions in the pathway metabolic intermediate biosynthesis; 1-deoxy-D-xylulose 5-phosphate biosynthesis; 1-deoxy-D-xylulose 5-phosphate from D-glyceraldehyde 3-phosphate and pyruvate: step 1/1. Its function is as follows. Catalyzes the acyloin condensation reaction between C atoms 2 and 3 of pyruvate and glyceraldehyde 3-phosphate to yield 1-deoxy-D-xylulose-5-phosphate (DXP). The polypeptide is 1-deoxy-D-xylulose-5-phosphate synthase 1 (Cereibacter sphaeroides (strain ATCC 17023 / DSM 158 / JCM 6121 / CCUG 31486 / LMG 2827 / NBRC 12203 / NCIMB 8253 / ATH 2.4.1.) (Rhodobacter sphaeroides)).